Reading from the N-terminus, the 90-residue chain is Probable Fe(2+)-trafficking protein (90 aa).

This sequence belongs to the Fe(2+)-trafficking protein family.

Functionally, could be a mediator in iron transactions between iron acquisition and iron-requiring processes, such as synthesis and/or repair of Fe-S clusters in biosynthetic enzymes. The chain is Probable Fe(2+)-trafficking protein from Xylella fastidiosa (strain M23).